A 316-amino-acid chain; its full sequence is PAK4-inhibitor inka1 (316 aa).

A disordered region spans residues 108–130 (YSEVSGSSLRGEEDDIVEEESET). Residues 119 to 128 (EEDDIVEEES) are compositionally biased toward acidic residues. 2 inka box regions span residues 182-219 (DSQD…DLPE) and 289-316 (SDIA…AGFL).

It belongs to the INKA family. As to quaternary structure, interacts with pak4/pak5.

The protein localises to the nucleus. Its subcellular location is the cytoplasm. Functionally, inhibitor of the serine/threonine-protein kinase pak4/pak5. Acts by binding pak4/pak5 in a substrate-like manner, inhibiting the protein kinase activity. Required for the proper migration of neural crest cells during embryonic development, probably by inhibiting pak4/pak5. The chain is PAK4-inhibitor inka1 from Xenopus laevis (African clawed frog).